The following is a 215-amino-acid chain: Adenylate kinase (215 aa).

10–15 is an ATP binding site; that stretch reads GSGKGT. Residues 30–59 form an NMP region; sequence STGDILREHVRNGTELGKEAKKYMDAGQLV. AMP is bound by residues T31, R36, 57-59, 85-88, and Q92; these read QLV and GYPR. The LID stretch occupies residues 126–162; that stretch reads GRRMCKCGRSYHIIFNPPKVPGKCDECGGELYHRDDD. Residue R127 coordinates ATP. Zn(2+) contacts are provided by C130 and C132. 135–136 serves as a coordination point for ATP; that stretch reads SY. C149 and C152 together coordinate Zn(2+). AMP is bound by residues R159 and R170. An ATP-binding site is contributed by G198.

The protein belongs to the adenylate kinase family. In terms of assembly, monomer.

It is found in the cytoplasm. The catalysed reaction is AMP + ATP = 2 ADP. It participates in purine metabolism; AMP biosynthesis via salvage pathway; AMP from ADP: step 1/1. Functionally, catalyzes the reversible transfer of the terminal phosphate group between ATP and AMP. Plays an important role in cellular energy homeostasis and in adenine nucleotide metabolism. The sequence is that of Adenylate kinase from Methanothrix thermoacetophila (strain DSM 6194 / JCM 14653 / NBRC 101360 / PT) (Methanosaeta thermophila).